The primary structure comprises 851 residues: MTSEQIRQTWLNFFKDKGHIIEPSASLIPVDDPTLLWINAGVAPLKKYFDGTETPKSKRITNIQKSIRTNDIDNVGKTARHHTFFEMMGNFSIGDYFKKEAIEFGFELLTSPKYFDIPLDKLYMTYYPTDVEAKNTWLKLGVKEDHLIPVEGNFWEIGAGPSGPDTEIFFDRGTSYDLRGPELIRDDIENERFIEIWNIVFSQYNADPKLKRSEYKELPNKNIDTGAGLERFACVLQGTKTNFETDLHYPVILKVESLSGVKYDGQMAFKVISDHIKTLVFAISDGANLSNEGRGYVLRRILRRAVKYGKSIGFDAPFLHLLVDTVVDMMSNFYTNLIETAVIVKKIILKEEEKFFSTILDGEKHLLQSIKDGKLSGEDAFKLYDTYGFPIELTIEYAEEHGITVDIKGFNEALEVQKSRSRDARKVTHSMKGQDEALLNFDVPSEFVGYDYLQTESKVIKVFDQGIVLDKTPFYANSGGQISDTGSINGLVVRDVIKLPHGQHLHLIETDAFTEGDEVLCIVNQDKRHHTMKNHTATHLLNQALKDTLGSHVKQQGSYNGDLKLTFDINHYETIKDEEILTVEKIVQQKIKEQIDVVTHVLPIDEAKKLGAAMQFGEKYGDIVRVVDVGSWSMEFCGGTHVKNTSDIKNFMITSVESIGSGTYRFEAITGQVLSQVKKIVQNLLDMIHQHIEKIKSLDENHNLKPLPELTGSYQDIINLRLYNQYISNESKVVEKQLEAKLIDQIILQADTFIPKTIEPTTYIYSDNLPQSSLKPLIDVLYDKIKADTVVLLNISEDKASYLVKSSVNEARNVINELNKVLDGRGGGKPDFAQGGTQALDKVQMFLKGKN.

Residues histidine 535, histidine 539, cysteine 637, and histidine 641 each contribute to the Zn(2+) site.

It belongs to the class-II aminoacyl-tRNA synthetase family. Zn(2+) is required as a cofactor.

The protein resides in the cytoplasm. It catalyses the reaction tRNA(Ala) + L-alanine + ATP = L-alanyl-tRNA(Ala) + AMP + diphosphate. Its function is as follows. Catalyzes the attachment of alanine to tRNA(Ala) in a two-step reaction: alanine is first activated by ATP to form Ala-AMP and then transferred to the acceptor end of tRNA(Ala). Also edits incorrectly charged Ser-tRNA(Ala) and Gly-tRNA(Ala) via its editing domain. In Acholeplasma laidlawii (strain PG-8A), this protein is Alanine--tRNA ligase.